Reading from the N-terminus, the 147-residue chain is Hemoglobin subunit epsilon (147 aa).

One can recognise a Globin domain in the interval 3 to 147 (HFTAEEKATI…VATALAHKYH (145 aa)). Phosphoserine is present on residues serine 14 and serine 51. Histidine 64 and histidine 93 together coordinate heme b.

It belongs to the globin family. In terms of assembly, heterotetramer of two alpha chains and two epsilon chains in early embryonic hemoglobin Gower-2; two zeta chains and two epsilon chains in early embryonic hemoglobin Gower-1. In terms of tissue distribution, red blood cells.

The epsilon chain is a beta-type chain of early mammalian embryonic hemoglobin. The protein is Hemoglobin subunit epsilon (HBE1) of Daubentonia madagascariensis (Aye-aye).